The sequence spans 472 residues: UDP-glycosyltransferase 708G2 (472 aa).

Residue histidine 23 is the Proton acceptor of the active site. Position 23 (histidine 23) interacts with an anthocyanidin. Aspartate 117 (charge relay) is an active-site residue. Position 140 (threonine 140) interacts with UDP-alpha-D-glucose. The segment at 283-284 (SR) is UDP. UDP-alpha-D-glucose is bound by residues valine 346, glutamine 348, histidine 363, tryptophan 366, asparagine 367, serine 368, and glutamate 371. An an anthocyanidin-binding site is contributed by glycine 386. Residues aspartate 387 and glutamine 388 each coordinate UDP-alpha-D-glucose.

It belongs to the UDP-glycosyltransferase family. Expressed at low levels in leaves, flowers and immature leaves.

The catalysed reaction is a 3'-hydro-2'-hydroxy-beta-oxodihydrochalcone + UDP-alpha-D-glucose = a 3'-(beta-D-glucopyranosyl)-2'-hydroxy-beta-oxodihydrochalcone + UDP + H(+). Its function is as follows. UDP-glucose-dependent glucosyltransferase catalyzing the C-glucosylation of 2-hydroxyflavanones (2-hydroxylnaringenin and 2-hydroxypinocembrin) and phloretin. No activity with flavanones, flavones or flavonols. Exhibits C-glucosylation activity toward 2-phenyl-2',4',6'-trihydroxyacetophenone. Can use UDP-xylose as sugar donor, but catalytic efficiency is much lower toward UDP-xylose than toward UDP-glucose. The chain is UDP-glycosyltransferase 708G2 (UGT708G2) from Citrus unshiu (Satsuma mandarin).